A 284-amino-acid chain; its full sequence is Bifunctional protein FolD (284 aa).

Residues 165–167 and Ser190 contribute to the NADP(+) site; that span reads GRS.

The protein belongs to the tetrahydrofolate dehydrogenase/cyclohydrolase family. Homodimer.

It carries out the reaction (6R)-5,10-methylene-5,6,7,8-tetrahydrofolate + NADP(+) = (6R)-5,10-methenyltetrahydrofolate + NADPH. It catalyses the reaction (6R)-5,10-methenyltetrahydrofolate + H2O = (6R)-10-formyltetrahydrofolate + H(+). The protein operates within one-carbon metabolism; tetrahydrofolate interconversion. Its function is as follows. Catalyzes the oxidation of 5,10-methylenetetrahydrofolate to 5,10-methenyltetrahydrofolate and then the hydrolysis of 5,10-methenyltetrahydrofolate to 10-formyltetrahydrofolate. The protein is Bifunctional protein FolD of Streptococcus pyogenes serotype M28 (strain MGAS6180).